We begin with the raw amino-acid sequence, 43 residues long: Protein PsbN (43 aa).

Residues 7–27 (LVVAIAAITICITAFAIYTAF) form a helical membrane-spanning segment.

It belongs to the PsbN family.

It localises to the cellular thylakoid membrane. May play a role in photosystem I and II biogenesis. The polypeptide is Protein PsbN (Synechococcus sp. (strain JA-3-3Ab) (Cyanobacteria bacterium Yellowstone A-Prime)).